The following is a 192-amino-acid chain: Phosphoheptose isomerase (192 aa).

Positions 37–192 (LADSFKAGGK…IQLIEKEMAK (156 aa)) constitute an SIS domain. 52 to 54 (NGG) is a binding site for substrate. His61 and Glu65 together coordinate Zn(2+). Substrate-binding positions include Glu65, 93–94 (ND), 119–121 (STS), Ser124, and Gln172. Positions 172 and 180 each coordinate Zn(2+).

The protein belongs to the SIS family. GmhA subfamily. Homotetramer. The cofactor is Zn(2+).

The protein resides in the cytoplasm. It carries out the reaction 2 D-sedoheptulose 7-phosphate = D-glycero-alpha-D-manno-heptose 7-phosphate + D-glycero-beta-D-manno-heptose 7-phosphate. It functions in the pathway carbohydrate biosynthesis; D-glycero-D-manno-heptose 7-phosphate biosynthesis; D-glycero-alpha-D-manno-heptose 7-phosphate and D-glycero-beta-D-manno-heptose 7-phosphate from sedoheptulose 7-phosphate: step 1/1. In terms of biological role, catalyzes the isomerization of sedoheptulose 7-phosphate in D-glycero-D-manno-heptose 7-phosphate. The sequence is that of Phosphoheptose isomerase from Escherichia fergusonii (strain ATCC 35469 / DSM 13698 / CCUG 18766 / IAM 14443 / JCM 21226 / LMG 7866 / NBRC 102419 / NCTC 12128 / CDC 0568-73).